A 128-amino-acid polypeptide reads, in one-letter code: Iron-sulfur cluster insertion protein ErpA (128 aa).

The iron-sulfur cluster site is built by C56, C120, and C122.

It belongs to the HesB/IscA family. Homodimer. The cofactor is iron-sulfur cluster.

Required for insertion of 4Fe-4S clusters for at least IspG. The polypeptide is Iron-sulfur cluster insertion protein ErpA (Xylella fastidiosa (strain M12)).